Consider the following 208-residue polypeptide: Uracil phosphoribosyltransferase (208 aa).

5-phospho-alpha-D-ribose 1-diphosphate is bound by residues arginine 78, arginine 103, and 130–138; that span reads DPMLATGGS. Uracil is bound by residues isoleucine 193 and 198–200; that span reads GDA. Residue aspartate 199 coordinates 5-phospho-alpha-D-ribose 1-diphosphate.

This sequence belongs to the UPRTase family. It depends on Mg(2+) as a cofactor.

It carries out the reaction UMP + diphosphate = 5-phospho-alpha-D-ribose 1-diphosphate + uracil. It functions in the pathway pyrimidine metabolism; UMP biosynthesis via salvage pathway; UMP from uracil: step 1/1. Its activity is regulated as follows. Allosterically activated by GTP. In terms of biological role, catalyzes the conversion of uracil and 5-phospho-alpha-D-ribose 1-diphosphate (PRPP) to UMP and diphosphate. This Thermus thermophilus (strain ATCC 27634 / DSM 579 / HB8) protein is Uracil phosphoribosyltransferase.